The sequence spans 514 residues: Polygalacturonase (514 aa).

An N-terminal signal peptide occupies residues 1 to 22 (MAMKFIAPMAFVAMQLIIMAAA). Residues 23-45 (EDQSAQIMLDSDIEQYLRSNRSL) constitute a propeptide that is removed on maturation. PbH1 repeat units follow at residues 214-240 (CEGV…DIFA), 241-262 (SKNF…AIGT), 264-284 (SSNI…SIGS), 294-315 (VSYV…RIKT), and 323-344 (ASHI…LINQ). Aspartate 255 (proton donor) is an active-site residue. Histidine 278 is a catalytic residue. A propeptide spanning residues 434–514 (AKRKESKSHK…CSRHGKIYHP (81 aa)) is cleaved from the precursor. 2 N-linked (GlcNAc...) asparagine glycosylation sites follow: asparagine 460 and asparagine 472.

This sequence belongs to the glycosyl hydrolase 28 family.

The protein localises to the secreted. The protein resides in the plastid. Its subcellular location is the amyloplast. It localises to the cell wall. The catalysed reaction is (1,4-alpha-D-galacturonosyl)n+m + H2O = (1,4-alpha-D-galacturonosyl)n + (1,4-alpha-D-galacturonosyl)m.. The protein is Polygalacturonase of Cryptomeria japonica (Japanese cedar).